Consider the following 105-residue polypeptide: NADH-quinone oxidoreductase subunit K (105 aa).

3 consecutive transmembrane segments (helical) span residues 7–27 (IGVN…MFAV), 34–54 (IVIL…FLTF), and 66–86 (FSLF…AIVI).

This sequence belongs to the complex I subunit 4L family. NDH-1 is composed of 14 different subunits. Subunits NuoA, H, J, K, L, M, N constitute the membrane sector of the complex.

It localises to the cell inner membrane. The catalysed reaction is a quinone + NADH + 5 H(+)(in) = a quinol + NAD(+) + 4 H(+)(out). NDH-1 shuttles electrons from NADH, via FMN and iron-sulfur (Fe-S) centers, to quinones in the respiratory chain. The immediate electron acceptor for the enzyme in this species is believed to be a menaquinone. Couples the redox reaction to proton translocation (for every two electrons transferred, four hydrogen ions are translocated across the cytoplasmic membrane), and thus conserves the redox energy in a proton gradient. This Chlorobaculum parvum (strain DSM 263 / NCIMB 8327) (Chlorobium vibrioforme subsp. thiosulfatophilum) protein is NADH-quinone oxidoreductase subunit K.